A 178-amino-acid chain; its full sequence is Inorganic pyrophosphatase (178 aa).

Substrate contacts are provided by K30, R44, and Y56. D66, D71, and D103 together coordinate Mg(2+). Residue Y140 participates in substrate binding.

Belongs to the PPase family. In terms of assembly, homohexamer. Mg(2+) serves as cofactor.

The protein resides in the cytoplasm. It carries out the reaction diphosphate + H2O = 2 phosphate + H(+). Its function is as follows. Catalyzes the hydrolysis of inorganic pyrophosphate (PPi) forming two phosphate ions. This is Inorganic pyrophosphatase from Pyrococcus furiosus (strain ATCC 43587 / DSM 3638 / JCM 8422 / Vc1).